Here is a 370-residue protein sequence, read N- to C-terminus: 3-dehydroquinate synthase (370 aa).

NAD(+)-binding positions include 107-111 (GVIGD), 131-132 (TS), lysine 144, and lysine 153. Positions 186, 249, and 267 each coordinate Zn(2+).

This sequence belongs to the sugar phosphate cyclases superfamily. Dehydroquinate synthase family. Co(2+) serves as cofactor. It depends on Zn(2+) as a cofactor. Requires NAD(+) as cofactor.

It is found in the cytoplasm. It catalyses the reaction 7-phospho-2-dehydro-3-deoxy-D-arabino-heptonate = 3-dehydroquinate + phosphate. It participates in metabolic intermediate biosynthesis; chorismate biosynthesis; chorismate from D-erythrose 4-phosphate and phosphoenolpyruvate: step 2/7. Catalyzes the conversion of 3-deoxy-D-arabino-heptulosonate 7-phosphate (DAHP) to dehydroquinate (DHQ). This chain is 3-dehydroquinate synthase, found in Jannaschia sp. (strain CCS1).